A 704-amino-acid polypeptide reads, in one-letter code: Neutral ceramidase (704 aa).

Residues 1–23 form the signal peptide; it reads MAISKIAFLALIALSGLCGLASA. Residue Asn230 is glycosylated (N-linked (GlcNAc...) asparagine). Ser276 (nucleophile) is an active-site residue. N-linked (GlcNAc...) asparagine glycans are attached at residues Asn362, Asn550, and Asn598.

The protein belongs to the neutral ceramidase family. N-glycosylated.

It is found in the secreted. It carries out the reaction an N-acylsphing-4-enine + H2O = sphing-4-enine + a fatty acid. In terms of biological role, hydrolyzes the sphingolipid ceramide into sphingosine and free fatty acid at an optimal pH of 6.5-7.5. Acts as a key regulator of sphingolipid signaling metabolites by generating sphingosine at the cell surface. This is Neutral ceramidase (CDase) from Drosophila pseudoobscura pseudoobscura (Fruit fly).